We begin with the raw amino-acid sequence, 200 residues long: dTTP/UTP pyrophosphatase (200 aa).

Catalysis depends on Asp-81, which acts as the Proton acceptor.

The protein belongs to the Maf family. YhdE subfamily. It depends on a divalent metal cation as a cofactor.

Its subcellular location is the cytoplasm. The enzyme catalyses dTTP + H2O = dTMP + diphosphate + H(+). It carries out the reaction UTP + H2O = UMP + diphosphate + H(+). Nucleoside triphosphate pyrophosphatase that hydrolyzes dTTP and UTP. May have a dual role in cell division arrest and in preventing the incorporation of modified nucleotides into cellular nucleic acids. This is dTTP/UTP pyrophosphatase from Cupriavidus metallidurans (strain ATCC 43123 / DSM 2839 / NBRC 102507 / CH34) (Ralstonia metallidurans).